The sequence spans 197 residues: MAVDAKLVKTLREMTGAGMLECKSALEEANGDLELAVEILRKKGVAKAAKKAGRETKEGLIHAYIHAGGRIGVLLELNCETDFVARNELFKELANEIALQIAAMKPQYVKREDVPREVVEKEGEIAREAAVAEGKPAHIAEKIAEGKLEKFYKEVCLYEQPYIKDDKKTIEELVKEYIAKIGENIQVRRFCRYELGE.

An involved in Mg(2+) ion dislocation from EF-Tu region spans residues 81–84 (TDFV).

Belongs to the EF-Ts family.

Its subcellular location is the cytoplasm. Functionally, associates with the EF-Tu.GDP complex and induces the exchange of GDP to GTP. It remains bound to the aminoacyl-tRNA.EF-Tu.GTP complex up to the GTP hydrolysis stage on the ribosome. The protein is Elongation factor Ts of Sulfurihydrogenibium sp. (strain YO3AOP1).